The sequence spans 278 residues: MKIIEAVNIRYTYPDGTEALKGIDFHAKKGEVVALLGPNGAGKSTLFLHFNGILQPTSGKVLVDGKEIDYSKSGLIKVRQKVGIVFQNPDDQLFAPRVDEDVAFGPLNMGLDEDEVEERVKDALRKVGMSGYEDRPPHHLSGGEKKRVAIAGILAMKPDIMILDEPTSGLDPRGASQILRLLHELNEEGMTIIISTHDVDLAPLYSDRIYIISGGEIISEGTPGDVFSDIDTIRGADLRLPRIAHLVEILQKEDDLPFGEPYPLTIGEARRKLRDQLK.

An ABC transporter domain is found at 4–239 (IEAVNIRYTY…IDTIRGADLR (236 aa)). 37–44 (GPNGAGKS) contributes to the ATP binding site.

The protein belongs to the ABC transporter superfamily.

The protein resides in the cell membrane. Functionally, probably part of an ABC transporter complex. Responsible for energy coupling to the transport system. The sequence is that of Putative ABC transporter ATP-binding protein MTBMA_c05830 from Methanothermobacter marburgensis (strain ATCC BAA-927 / DSM 2133 / JCM 14651 / NBRC 100331 / OCM 82 / Marburg) (Methanobacterium thermoautotrophicum).